A 312-amino-acid polypeptide reads, in one-letter code: Very-long-chain 3-oxoacyl-CoA reductase-like protein At1g24470 (312 aa).

A helical transmembrane segment spans residues 14-34; it reads LHFVCFIGFLFLLRVLFIPLL. 52-81 contributes to the NADP(+) binding site; that stretch reads GSWAMVTGATEGIGRAFAHELAKHGLNLIL. S190 lines the substrate pocket. The active-site Proton acceptor is the Y205.

Belongs to the short-chain dehydrogenases/reductases (SDR) family. Expressed in green siliques, flowers, inflorescence stems and leaves. Not detected in roots.

The protein resides in the endoplasmic reticulum membrane. Functionally, probable reductase, but unlike KCR1, has no beta-ketoacyl-coenzyme A reductase activity. The chain is Very-long-chain 3-oxoacyl-CoA reductase-like protein At1g24470 (KCR2) from Arabidopsis thaliana (Mouse-ear cress).